A 363-amino-acid chain; its full sequence is MKLDSVQIRNLRNLQHVTFKPSHGVNFILGINGSGKSSILEAIHYLGFGRSFRTSKHKNVIQNEQESFTVFCECLEDSTTQRLGLSRSINDTVSVSINGIKGNKVSDLVSLLPVQIFTPQSSDILLGAPKLRRKYIDWCLFHVEHSFLTCSNAYSRLLKHNNALCRKQQVGYANPQRVYWTDLLAQYGSELTEFRNAMMTRLIPLITSNLAQFLPEFCVEISYYRGWEKGLELNEALTKSADRDYKNGYISVGPHKADVRFKISGKPAQEVLSRGQLRMLVAALQLATTQCLMSYTQKTCIFLLDDVGAELDAAKREVFIDRLLESNTQLFVTAIEEHQLEFIDKYQNKKMFHVEHGQVREES.

30–37 (GINGSGKS) is an ATP binding site.

It belongs to the RecF family.

The protein localises to the cytoplasm. The RecF protein is involved in DNA metabolism; it is required for DNA replication and normal SOS inducibility. RecF binds preferentially to single-stranded, linear DNA. It also seems to bind ATP. This chain is DNA replication and repair protein RecF, found in Pseudoalteromonas atlantica (strain T6c / ATCC BAA-1087).